The primary structure comprises 473 residues: Photosystem II CP43 reaction center protein (473 aa).

Residues 1–14 (MKTLYSLRRFYPVE) constitute a propeptide that is removed on maturation. Thr15 bears the N-acetylthreonine mark. Thr15 carries the phosphothreonine modification. 5 helical membrane passes run 69–93 (LFEV…PHLA), 134–155 (LLGP…KDRN), 178–200 (KALY…RRIT), 255–275 (KPFA…LSYS), and 291–312 (WFNN…ASQA). Glu367 contacts [CaMn4O5] cluster. Residues 447–471 (RARAAAAGFEKGIDRDFEPVLSMTP) form a helical membrane-spanning segment.

It belongs to the PsbB/PsbC family. PsbC subfamily. As to quaternary structure, PSII is composed of 1 copy each of membrane proteins PsbA, PsbB, PsbC, PsbD, PsbE, PsbF, PsbH, PsbI, PsbJ, PsbK, PsbL, PsbM, PsbT, PsbX, PsbY, PsbZ, Psb30/Ycf12, at least 3 peripheral proteins of the oxygen-evolving complex and a large number of cofactors. It forms dimeric complexes. Binds multiple chlorophylls and provides some of the ligands for the Ca-4Mn-5O cluster of the oxygen-evolving complex. It may also provide a ligand for a Cl- that is required for oxygen evolution. PSII binds additional chlorophylls, carotenoids and specific lipids. is required as a cofactor.

It is found in the plastid. The protein localises to the chloroplast thylakoid membrane. Functionally, one of the components of the core complex of photosystem II (PSII). It binds chlorophyll and helps catalyze the primary light-induced photochemical processes of PSII. PSII is a light-driven water:plastoquinone oxidoreductase, using light energy to abstract electrons from H(2)O, generating O(2) and a proton gradient subsequently used for ATP formation. The sequence is that of Photosystem II CP43 reaction center protein from Illicium oligandrum (Star anise).